The chain runs to 628 residues: tRNA uridine 5-carboxymethylaminomethyl modification enzyme MnmG (628 aa).

13–18 serves as a coordination point for FAD; it reads GAGHAG. An NAD(+)-binding site is contributed by 281–295; it reads GARYCPSIEDKIKKF.

Belongs to the MnmG family. In terms of assembly, homodimer. Heterotetramer of two MnmE and two MnmG subunits. FAD is required as a cofactor.

Its subcellular location is the cytoplasm. NAD-binding protein involved in the addition of a carboxymethylaminomethyl (cmnm) group at the wobble position (U34) of certain tRNAs, forming tRNA-cmnm(5)s(2)U34. The protein is tRNA uridine 5-carboxymethylaminomethyl modification enzyme MnmG of Treponema denticola (strain ATCC 35405 / DSM 14222 / CIP 103919 / JCM 8153 / KCTC 15104).